Here is a 196-residue protein sequence, read N- to C-terminus: Type-4 uracil-DNA glycosylase (196 aa).

[4Fe-4S] cluster contacts are provided by Cys13 and Cys16. Uracil-binding positions include Gly40–Ala42, Phe54, and Asn80. Positions 84 and 100 each coordinate [4Fe-4S] cluster. A uracil-binding site is contributed by His162.

This sequence belongs to the uracil-DNA glycosylase (UDG) superfamily. Type 4 (UDGa) family.

It carries out the reaction Hydrolyzes single-stranded DNA or mismatched double-stranded DNA and polynucleotides, releasing free uracil.. In terms of biological role, removes uracil bases that are present in DNA as a result of either deamination of cytosine or misincorporation of dUMP instead of dTMP. Can remove uracil from double-stranded DNA containing either a U/G or U/A base pair as well as from single-stranded DNA. The protein is Type-4 uracil-DNA glycosylase of Pyrobaculum aerophilum (strain ATCC 51768 / DSM 7523 / JCM 9630 / CIP 104966 / NBRC 100827 / IM2).